The primary structure comprises 282 residues: Uracil-DNA glycosylase (282 aa).

Residues 15–40 (SAASKRKSASNTENIPEKVPAGNENQ) form a disordered region. Catalysis depends on Asp-123, which acts as the Proton acceptor.

It belongs to the uracil-DNA glycosylase (UDG) superfamily. UNG family.

The protein localises to the mitochondrion. Its subcellular location is the nucleus. The enzyme catalyses Hydrolyzes single-stranded DNA or mismatched double-stranded DNA and polynucleotides, releasing free uracil.. Inhibited by UGI, a B.subtilis bacteriophage PBS2 peptide inhibitor. In terms of biological role, excises uracil residues from the DNA which can arise as a result of misincorporation of dUMP residues by DNA polymerase or due to deamination of cytosine. The protein is Uracil-DNA glycosylase of Caenorhabditis elegans.